The chain runs to 505 residues: Cytochrome P450 monooxygenase efuB (505 aa).

The helical transmembrane segment at 12–34 (GFWPTVAGTVATYLFYQIVATVY) threads the bilayer. Cys450 is a heme binding site.

The protein belongs to the cytochrome P450 family. The cofactor is heme.

It is found in the membrane. It participates in secondary metabolite biosynthesis; terpenoid biosynthesis. Its function is as follows. Cytochrome P450 monooxygenase; part of the gene cluster that mediates the biosynthesis of enfumafungin, a glycosylated fernene-type triterpenoid with potent antifungal activity, mediated by its interaction with beta-1,3-glucan synthase and the fungal cell wall. The pathway begins with the terpene cyclase-glycosyl transferase fusion protein that most likely uses 2,3-oxidosqualene as substrate and catalyzes glycosylation immediately after cyclization. The fernene glycoside then could be processed by the desaturase efuI which catalyzes isomerization of a double bond established by efuA to form the core structure. The latter would then undergo a series of hydroxylations in unknown order at C-2, C-19, C-23 and C-25, which would be catalyzed by two of the three cytochrome P450 monooxygenases efuB, efuG or efuH. The hydroxy-group at C-25 becomes oxidized by the dehydrogenase efuE to enable a spontaneous, non-enzymatic hemiacetal formation with C-23. After hydroxylation at C-2, acetylation by the acetyltransferase efuC takes place. The final steps in enfumafungin biosynthesis require expansion of the 5-membered ring by lactonization via a Baeyer-Villiger reaction mediated by one of the BGC's cytochrome P450 monooxygenases (efuB, efuG or efuH) followed by ring cleavage. This type of reaction would establish a double bond between C-20 and C-21 which could be reduced by the reductase efuL to form the final product. This Hormonema carpetanum protein is Cytochrome P450 monooxygenase efuB.